Reading from the N-terminus, the 556-residue chain is Glucose-6-phosphate isomerase (556 aa).

The active-site Proton donor is the Glu-364. Active-site residues include His-395 and Lys-521.

This sequence belongs to the GPI family.

Its subcellular location is the cytoplasm. The enzyme catalyses alpha-D-glucose 6-phosphate = beta-D-fructose 6-phosphate. Its pathway is carbohydrate biosynthesis; gluconeogenesis. It participates in carbohydrate degradation; glycolysis; D-glyceraldehyde 3-phosphate and glycerone phosphate from D-glucose: step 2/4. Catalyzes the reversible isomerization of glucose-6-phosphate to fructose-6-phosphate. The polypeptide is Glucose-6-phosphate isomerase (Corynebacterium kroppenstedtii (strain DSM 44385 / JCM 11950 / CIP 105744 / CCUG 35717)).